A 155-amino-acid polypeptide reads, in one-letter code: Small ribosomal subunit protein uS7 (155 aa).

This sequence belongs to the universal ribosomal protein uS7 family. Part of the 30S ribosomal subunit. Contacts proteins S9 and S11.

Functionally, one of the primary rRNA binding proteins, it binds directly to 16S rRNA where it nucleates assembly of the head domain of the 30S subunit. Is located at the subunit interface close to the decoding center, probably blocks exit of the E-site tRNA. The sequence is that of Small ribosomal subunit protein uS7 from Thermosipho africanus (strain TCF52B).